The following is a 1799-amino-acid chain: 1,3-beta-glucan synthase component FKS1 (1799 aa).

Pro residues predominate over residues 1 to 11 (MSYPNPPPPPK). Positions 1-136 (MSYPNPPPPP…SNAGHRPRDP (136 aa)) are disordered. A compositionally biased stretch (low complexity) spans 12 to 23 (GSASFSSSSSDP). The segment covering 51–64 (GAGGAGVAPPGQGG) has biased composition (gly residues). A compositionally biased stretch (polar residues) spans 91–101 (ASESGWSQNEP). 16 consecutive transmembrane segments (helical) span residues 431-451 (IWVLHISVFWFFTAYNAPSIY), 470-490 (LGGFVATLIMIAATLAEFSYI), 504-524 (LIFLLIILAITGGPSIYIAFF), 530-550 (VALILGIVQFFCSVVATIAFA), 591-611 (FLLWFLVFGCKFTESYFFLTL), 648-668 (VMFVMDLTLFFLDTFLWYVIW), 1268-1288 (NILVMMSVQVFMLALVFLGTL), 1323-1343 (CIISIFIVFWIAFVPLFVQEL), 1422-1442 (LVLLLFITLTVWVPHLIYFWI), 1446-1466 (GLCVAPFLFNPHQFAIADFII), 1527-1547 (IGEIIGPICLAILFVICYLFI), 1563-1583 (IAIIALGPIVWNMALLITLFL), 1605-1625 (ALAHFGAVAGMLVFFELLWFL), 1635-1655 (LGIIAVISVQRCIFKFLIAVF), 1704-1724 (DFIACHLLLALLTIPMFIPYF), and 1762-1782 (GLLYLIIQGIFIALIVVPIIF).

The protein belongs to the glycosyltransferase 48 family. Component of the 1,3-beta-glucan synthase (GS) complex composed of a catalytic subunit FKS1 and a regulatory subunit RHO1.

It localises to the cell membrane. It catalyses the reaction [(1-&gt;3)-beta-D-glucosyl](n) + UDP-alpha-D-glucose = [(1-&gt;3)-beta-D-glucosyl](n+1) + UDP + H(+). With respect to regulation, activated by magnesium ions. Inhibited by caspofungin and cilofungin. In terms of biological role, catalytic subunit of the 1,3-beta-glucan synthase (GS) complex. Synthesizes 1,3-beta-glucan, a major structural component of the yeast cell wall. Involved in cell wall synthesis, maintenance and remodeling. This is 1,3-beta-glucan synthase component FKS1 from Cryptococcus neoformans var. grubii serotype A (strain H99 / ATCC 208821 / CBS 10515 / FGSC 9487) (Filobasidiella neoformans var. grubii).